The following is a 476-amino-acid chain: Serine/threonine-protein kinase Chk1 (476 aa).

Residues 1-265 (MAVPFVEDWD…IPDIKKDRWY (265 aa)) are interaction with CLSPN. One can recognise a Protein kinase domain in the interval 9–265 (WDLVQTLGEG…IPDIKKDRWY (257 aa)). ATP-binding positions include 15 to 23 (LGEGAYGEV) and Lys-38. Asp-130 (proton acceptor) is an active-site residue. Residue Lys-132 forms a Glycyl lysine isopeptide (Lys-Gly) (interchain with G-Cter in ubiquitin) linkage. A disordered region spans residues 267–331 (KPLNRGAKRP…RTGLSLWDTG (65 aa)). Ser-280 bears the Phosphoserine; by PKB/AKT1 mark. A compositionally biased stretch (low complexity) spans 280-291 (SGGMSESSSGFS). Residues Ser-286, Ser-296, and Ser-301 each carry the phosphoserine modification. A compositionally biased stretch (polar residues) spans 298 to 320 (LDFSPVNNGSSEETVKFSSSQPE). Ser-317 carries the phosphoserine; by ATM and ATR modification. Ser-345 is subject to Phosphoserine; by ATR. The autoinhibitory region stretch occupies residues 391 to 476 (QCLKETFEKL…SSQKVWFPVT (86 aa)). Residue Lys-436 forms a Glycyl lysine isopeptide (Lys-Gly) (interchain with G-Cter in ubiquitin) linkage. A phosphoserine mark is found at Ser-463, Ser-467, and Ser-468.

This sequence belongs to the protein kinase superfamily. CAMK Ser/Thr protein kinase family. NIM1 subfamily. Interacts (phosphorylated by ATR) with RAD51. Interacts with and phosphorylates CLSPN, an adapter protein that regulates the ATR-dependent phosphorylation of CHEK1. Interacts with BRCA1. Interacts with and phosphorylates CDC25A, CDC25B and CDC25C. Interacts with FBXO6, which regulates CHEK1. Interacts with PPM1D, which regulates CHEK1 through dephosphorylation. Interacts with TIMELESS; DNA damage-dependent. Interacts with FEM1B; activates CHEK1 in response to stress. Interacts with TLK1. Interacts with XPO1 and YWHAZ. Interacts with CDK5RAP3; antagonizes CHEK1. In terms of processing, phosphorylated by ATR in a RAD17-dependent manner in response to ultraviolet irradiation and inhibition of DNA replication. Phosphorylated by ATM in response to ionizing irradiation. ATM and ATR can both phosphorylate Ser-317 and Ser-345 and this results in enhanced kinase activity. Phosphorylation at Ser-345 induces a change in the conformation of the protein, activates the kinase activity and is a prerequisite for interaction with FBXO6 and subsequent ubiquitination at Lys-436. Phosphorylation at Ser-345 also increases binding to 14-3-3 proteins and promotes nuclear retention. Conversely, dephosphorylation at Ser-345 by PPM1D may contribute to exit from checkpoint mediated cell cycle arrest. Phosphorylation at Ser-280 by AKT1/PKB, may promote mono and/or diubiquitination. Also phosphorylated at undefined residues during mitotic arrest, resulting in decreased activity. Ubiquitinated. Mono or diubiquitination promotes nuclear exclusion. The activated form (phosphorylated on Ser-345) is polyubiquitinated at Lys-436 by some SCF-type E3 ubiquitin ligase complex containing FBXO6 promoting its degradation. Ubiquitination and degradation are required to terminate the checkpoint and ensure that activated CHEK1 does not accumulate as cells progress through S phase, when replication forks encounter transient impediments during normal DNA replication. 'Lys-63'-mediated ubiquitination by TRAF4 at Lys-132 activates cell cycle arrest and activation of DNA repair. Post-translationally, proteolytically cleaved at the C-terminus by SPRTN during normal DNA replication, thereby promoting CHEK1 removal from chromatin and activating the protein kinase activity. Found in all adult tissues tested. Elevated expression in testis, lung and spleen. 15.5 day old embryos show ubiquitous expression with strong expression in brain, liver, kidney, pancreas, intestine, thymus and lung.

It localises to the nucleus. Its subcellular location is the chromosome. The protein localises to the cytoplasm. The protein resides in the cytoskeleton. It is found in the microtubule organizing center. It localises to the centrosome. It carries out the reaction L-seryl-[protein] + ATP = O-phospho-L-seryl-[protein] + ADP + H(+). It catalyses the reaction L-threonyl-[protein] + ATP = O-phospho-L-threonyl-[protein] + ADP + H(+). Its activity is regulated as follows. Activated through phosphorylation predominantly by ATR but also by ATM in response to DNA damage or inhibition of DNA replication. Activation is modulated by several mediators including CLSPN, BRCA1 and FEM1B. Proteolytic cleavage at the C-terminus by SPRTN during normal DNA replication activates the protein kinase activity. In terms of biological role, serine/threonine-protein kinase which is required for checkpoint-mediated cell cycle arrest and activation of DNA repair in response to the presence of DNA damage or unreplicated DNA. May also negatively regulate cell cycle progression during unperturbed cell cycles. This regulation is achieved by a number of mechanisms that together help to preserve the integrity of the genome. Recognizes the substrate consensus sequence [R-X-X-S/T]. Binds to and phosphorylates CDC25A, CDC25B and CDC25C. Phosphorylation of CDC25A at 'Ser-178' and 'Thr-507' and phosphorylation of CDC25C at 'Ser-216' creates binding sites for 14-3-3 proteins which inhibit CDC25A and CDC25C. Phosphorylation of CDC25A at 'Ser-76', 'Ser-124', 'Ser-178', 'Ser-279' and 'Ser-293' promotes proteolysis of CDC25A. Phosphorylation of CDC25A at 'Ser-76' primes the protein for subsequent phosphorylation at 'Ser-79', 'Ser-82' and 'Ser-88' by NEK11, which is required for polyubiquitination and degradation of CDCD25A. Inhibition of CDC25 leads to increased inhibitory tyrosine phosphorylation of CDK-cyclin complexes and blocks cell cycle progression. Also phosphorylates NEK6. Binds to and phosphorylates RAD51 at 'Thr-309', which promotes the release of RAD51 from BRCA2 and enhances the association of RAD51 with chromatin, thereby promoting DNA repair by homologous recombination. Phosphorylates multiple sites within the C-terminus of TP53, which promotes activation of TP53 by acetylation and promotes cell cycle arrest and suppression of cellular proliferation. Also promotes repair of DNA cross-links through phosphorylation of FANCE. Binds to and phosphorylates TLK1 at 'Ser-743', which prevents the TLK1-dependent phosphorylation of the chromatin assembly factor ASF1A. This may enhance chromatin assembly both in the presence or absence of DNA damage. May also play a role in replication fork maintenance through regulation of PCNA. May regulate the transcription of genes that regulate cell-cycle progression through the phosphorylation of histones. Phosphorylates histone H3.1 (to form H3T11ph), which leads to epigenetic inhibition of a subset of genes. May also phosphorylate RB1 to promote its interaction with the E2F family of transcription factors and subsequent cell cycle arrest. Phosphorylates SPRTN, promoting SPRTN recruitment to chromatin. Reduces replication stress and activates the G2/M checkpoint, by phosphorylating and inactivating PABIR1/FAM122A and promoting the serine/threonine-protein phosphatase 2A-mediated dephosphorylation and stabilization of WEE1 levels and activity. In Mus musculus (Mouse), this protein is Serine/threonine-protein kinase Chk1 (Chek1).